Here is a 162-residue protein sequence, read N- to C-terminus: Sorting nexin-3 (162 aa).

Ala-2 is subject to N-acetylalanine. The region spanning 27 to 151 (NFLEIDVSNP…HMFLQDEIID (125 aa)) is the PX domain. Omega-N-methylarginine is present on Arg-43. Residues Arg-70, Ser-72, Lys-95, and Arg-118 each contribute to the a 1,2-diacyl-sn-glycero-3-phospho-(1D-myo-inositol-3-phosphate) site. Ser-72 carries the phosphoserine modification. Lys-95 participates in a covalent cross-link: Glycyl lysine isopeptide (Lys-Gly) (interchain with G-Cter in SUMO2). The binds predominantly to PtdIns(P5) and weaker to PtdIns(P3) abd PtdIns(P4); involved in neurite outgrowth regulation stretch occupies residues 147–162 (DEIIDKSYTPSKIRHA).

It belongs to the sorting nexin family. As to quaternary structure, interacts with VPS26A, VPS29 and VPS35; the interaction with VPS35 is direct. The association with the retromer CSC subcomplex subunits is proposed to represent a functional distinct retromer variant described as SNX3-retromer complex. Interacts with USP10 and SCNN1A. Interacts with TRFC. Interacts with SNX8; 2 molecules of SNX8 seems to associate with one molecule of SNX3. Interacts with PTPRU. Interacts with MON2 and DOP1B. Ubiquitinated, leading to its proteasomal degradation. Deubiquitinated by USP10.

The protein resides in the early endosome. Its subcellular location is the cytoplasmic vesicle. It localises to the phagosome. In terms of biological role, phosphoinositide-binding protein required for multivesicular body formation. Specifically binds phosphatidylinositol 3-phosphate (PtdIns(P3)). Can also bind phosphatidylinositol 4-phosphate (PtdIns(P4)), phosphatidylinositol 5-phosphate (PtdIns(P5)) and phosphatidylinositol 3,5-biphosphate (PtdIns(3,5)P2). Plays a role in protein transport between cellular compartments. Together with RAB7A facilitates endosome membrane association of the retromer cargo-selective subcomplex (CSC/VPS). May in part act as component of the SNX3-retromer complex which mediates the retrograde endosome-to-TGN transport of WLS distinct from the SNX-BAR retromer pathway. Promotes stability and cell surface expression of epithelial sodium channel (ENAC) subunits SCNN1A and SCNN1G. Not involved in EGFR degradation. Involved in the regulation of phagocytosis in dendritic cells possibly by regulating EEA1 recruitment to the nascent phagosomes. Involved in iron homeostasis through regulation of endocytic recycling of the transferrin receptor TFRC presumably by delivering the transferrin:transferrin receptor complex to recycling endosomes; the function may involve the CSC retromer subcomplex. In the case of Salmonella enterica infection plays arole in maturation of the Salmonella-containing vacuole (SCV) and promotes recruitment of LAMP1 to SCVs. The polypeptide is Sorting nexin-3 (Homo sapiens (Human)).